A 394-amino-acid chain; its full sequence is Autophagy-related protein 18 (394 aa).

One copy of the WD 1 repeat lies at 4 to 42 (LSNTKLNYVTFNQDHSCLAVATSRGFRIYHTDPFSKIFN). Residues 146-165 (MPKPREDQGERRPAHAPPLS) form a disordered region. Residues 148 to 158 (KPREDQGERRP) show a composition bias toward basic and acidic residues. 2 WD repeats span residues 191–231 (AHKM…KLFE) and 236–275 (TIPS…NANA). The L/FRRG motif signature appears at 232-236 (FRRGT). Residues 274 to 342 (NAGGAGPAAL…QSGTFGSMLR (69 aa)) are disordered. Residues 302-312 (GSEYSPSGDSD) are compositionally biased toward low complexity. Polar residues predominate over residues 331 to 342 (RRQSGTFGSMLR).

The protein belongs to the WD repeat PROPPIN family. In terms of assembly, component of the PI(3,5)P2 regulatory complex.

It is found in the preautophagosomal structure membrane. It localises to the vacuole membrane. The protein resides in the endosome membrane. Functionally, the PI(3,5)P2 regulatory complex regulates both the synthesis and turnover of phosphatidylinositol 3,5-bisphosphate (PtdIns(3,5)P2). Necessary for proper vacuole morphology. Plays an important role in osmotically-induced vacuole fragmentation. Required for cytoplasm to vacuole transport (Cvt) vesicle formation, pexophagy and starvation-induced autophagy. Involved in correct ATG9 trafficking to the pre-autophagosomal structure. Might also be involved in premeiotic DNA replication. The polypeptide is Autophagy-related protein 18 (ATG18) (Chaetomium globosum (strain ATCC 6205 / CBS 148.51 / DSM 1962 / NBRC 6347 / NRRL 1970) (Soil fungus)).